The primary structure comprises 191 residues: Ribonuclease MC (191 aa).

Residue Q9 participates in RNA binding. C15 and C23 are joined by a disulfide. RNA is bound by residues H34, 72 to 73 (NV), R75, F81, 84 to 85 (HE), and 88 to 89 (KH). H34 functions as the Proton donor in the catalytic mechanism. 3 disulfides stabilise this stretch: C48–C92, C152–C185, and C169–C180. E85 is a catalytic residue. The Proton acceptor role is filled by H89.

Belongs to the RNase T2 family.

The enzyme catalyses a ribonucleotidyl-ribonucleotide-RNA + H2O = a 3'-end 3'-phospho-ribonucleotide-RNA + a 5'-end dephospho-ribonucleoside-RNA + H(+). Its function is as follows. Ribonuclease cleaving preferentially the 5'-side of uridine. This Momordica charantia (Bitter gourd) protein is Ribonuclease MC.